Reading from the N-terminus, the 252-residue chain is Triosephosphate isomerase (252 aa).

9–11 lines the substrate pocket; sequence NWK. Residue His-100 is the Electrophile of the active site. Glu-171 serves as the catalytic Proton acceptor. Substrate-binding positions include Gly-177, Ser-216, and 237–238; that span reads GG.

This sequence belongs to the triosephosphate isomerase family. In terms of assembly, homodimer.

Its subcellular location is the cytoplasm. It carries out the reaction D-glyceraldehyde 3-phosphate = dihydroxyacetone phosphate. It participates in carbohydrate biosynthesis; gluconeogenesis. It functions in the pathway carbohydrate degradation; glycolysis; D-glyceraldehyde 3-phosphate from glycerone phosphate: step 1/1. Functionally, involved in the gluconeogenesis. Catalyzes stereospecifically the conversion of dihydroxyacetone phosphate (DHAP) to D-glyceraldehyde-3-phosphate (G3P). In Polynucleobacter necessarius subsp. necessarius (strain STIR1), this protein is Triosephosphate isomerase.